The sequence spans 122 residues: Large ribosomal subunit protein bL12 (122 aa).

Belongs to the bacterial ribosomal protein bL12 family. In terms of assembly, homodimer. Part of the ribosomal stalk of the 50S ribosomal subunit. Forms a multimeric L10(L12)X complex, where L10 forms an elongated spine to which 2 to 4 L12 dimers bind in a sequential fashion. Binds GTP-bound translation factors.

In terms of biological role, forms part of the ribosomal stalk which helps the ribosome interact with GTP-bound translation factors. Is thus essential for accurate translation. This chain is Large ribosomal subunit protein bL12, found in Flavobacterium psychrophilum (strain ATCC 49511 / DSM 21280 / CIP 103535 / JIP02/86).